The primary structure comprises 133 residues: Succinate dehydrogenase assembly factor 3, mitochondrial (133 aa).

The N-terminal 12 residues, 1–12, are a transit peptide targeting the mitochondrion; the sequence is MNNKLIYRSVRF.

Belongs to the complex I LYR family. SDHAF3 subfamily. As to quaternary structure, interacts with SDH2 within an SDH1-SDH2 subcomplex.

The protein localises to the mitochondrion. It is found in the mitochondrion intermembrane space. The protein resides in the mitochondrion matrix. Its function is as follows. Plays an essential role in the assembly of succinate dehydrogenase (SDH), an enzyme complex (also referred to as respiratory complex II) that is a component of both the tricarboxylic acid (TCA) cycle and the mitochondrial electron transport chain, and which couples the oxidation of succinate to fumarate with the reduction of ubiquinone (coenzyme Q) to ubiquinol. Promotes maturation of the iron-sulfur protein subunit SDH2 of the SDH catalytic dimer, protecting it from the deleterious effects of oxidants. Acts together with SDHAF1 (SDH6). This Saccharomyces cerevisiae (strain ATCC 204508 / S288c) (Baker's yeast) protein is Succinate dehydrogenase assembly factor 3, mitochondrial.